A 360-amino-acid chain; its full sequence is Phosphoserine aminotransferase (360 aa).

Arg-42 provides a ligand contact to L-glutamate. Residues Ala-76 to Ser-77, Trp-102, Thr-152, Asp-172, and Gln-195 contribute to the pyridoxal 5'-phosphate site. Residue Lys-196 is modified to N6-(pyridoxal phosphate)lysine. Position 237-238 (Asn-237–Thr-238) interacts with pyridoxal 5'-phosphate.

The protein belongs to the class-V pyridoxal-phosphate-dependent aminotransferase family. SerC subfamily. As to quaternary structure, homodimer. It depends on pyridoxal 5'-phosphate as a cofactor.

The protein localises to the cytoplasm. The enzyme catalyses O-phospho-L-serine + 2-oxoglutarate = 3-phosphooxypyruvate + L-glutamate. It catalyses the reaction 4-(phosphooxy)-L-threonine + 2-oxoglutarate = (R)-3-hydroxy-2-oxo-4-phosphooxybutanoate + L-glutamate. It functions in the pathway amino-acid biosynthesis; L-serine biosynthesis; L-serine from 3-phospho-D-glycerate: step 2/3. Functionally, catalyzes the reversible conversion of 3-phosphohydroxypyruvate to phosphoserine and of 3-hydroxy-2-oxo-4-phosphonooxybutanoate to phosphohydroxythreonine. The polypeptide is Phosphoserine aminotransferase (Bacillus cereus (strain ATCC 10987 / NRS 248)).